Here is a 402-residue protein sequence, read N- to C-terminus: Phosphoglycerate kinase (402 aa).

Substrate is bound by residues Asp-21 to Asn-23, Arg-36, His-59 to Arg-62, Arg-119, and Arg-154. Residues Lys-207, Gly-298, Glu-329, and Gly-356 to Ala-359 each bind ATP.

This sequence belongs to the phosphoglycerate kinase family. As to quaternary structure, monomer.

It localises to the cytoplasm. It carries out the reaction (2R)-3-phosphoglycerate + ATP = (2R)-3-phospho-glyceroyl phosphate + ADP. Its pathway is carbohydrate degradation; glycolysis; pyruvate from D-glyceraldehyde 3-phosphate: step 2/5. This Chlamydia pneumoniae (Chlamydophila pneumoniae) protein is Phosphoglycerate kinase (pgk).